The following is a 514-amino-acid chain: Developmental and secondary metabolism regulator veA (514 aa).

The 193-residue stretch at 26–218 folds into the Velvet domain; that stretch reads NRHLWYQLTV…ADQGCHVRIR (193 aa). A Nuclear localization signal motif is present at residues 40–45; sequence ERARAC. The interval 219-463 is disordered; it reads RDVRMRKRDA…PIGSKRKHDQ (245 aa). Positions 228–243 are enriched in basic and acidic residues; it reads AKSNNGRDRREDDMAR. Residues 256–267 are compositionally biased toward low complexity; that stretch reads SAAARARSMSNS. The span at 386–396 shows a compositional bias: polar residues; it reads SYPSTPVSSHP. Residues 411 to 448 are PEST; the sequence is KSPSNSVSPSNSSLKITDLLVQPLPSSEPKLEVGSAPC. Residues 412–423 show a composition bias toward low complexity; it reads SPSNSVSPSNSS.

Belongs to the velvet family. VeA subfamily. As to quaternary structure, component of the heterotrimeric velvet complex composed of laeA, veA and velB; VeA acting as a bridging protein between laeA and velB.

The protein localises to the nucleus. Its subcellular location is the cytoplasm. Functionally, component of the velvet transcription factor complex that controls sexual/asexual developmental ratio in response to light, promoting sexual development in the darkness while stimulating asexual sporulation under illumination. The velvet complex hat acts as a global regulator for secondary metabolite gene expression. Controls the expression of the cephalosporin C gene cluster. Regulates hyphal fragmentation. In Hapsidospora chrysogenum (strain ATCC 11550 / CBS 779.69 / DSM 880 / IAM 14645 / JCM 23072 / IMI 49137) (Acremonium chrysogenum), this protein is Developmental and secondary metabolism regulator veA.